Reading from the N-terminus, the 1019-residue chain is Clotting factor C (1019 aa).

An N-terminal signal peptide occupies residues 1-25 (MVLASFLVSGLVLGILAQQMRPVQS). The region spanning 102–137 (YGTWCSGECQCKNGGICDQRTGACTCRDRYEGAHCE) is the EGF-like domain. 16 disulfide bridges follow: Cys110-Cys118, Cys112-Cys125, Cys127-Cys136, Cys142-Cys182, Cys168-Cys195, Cys199-Cys241, Cys227-Cys254, Cys260-Cys308, Cys294-Cys321, Cys331-Cys350, Cys354-Cys374, Cys464-Cys564, Cys538-Cys556, Cys576-Cys621, Cys607-Cys634, and Cys720-Cys748. Sushi domains follow at residues 140-197 (KGCP…KCIR), 198-256 (ECAK…QCKK), and 258-323 (VFCP…SCVK). One can recognise an LCCL domain in the interval 325–421 (ADREVDCDSK…EELKSLARSF (97 aa)). One can recognise a C-type lectin domain in the interval 436-568 (CPDGWFEVEE…PSSFACMMDL (133 aa)). N-linked (GlcNAc...) asparagine glycans are attached at residues Asn523 and Asn534. 2 Sushi domains span residues 574–636 (AKCD…RCIK) and 689–750 (PRSS…SCIP). Residues Asn624, Asn740, and Asn767 are each glycosylated (N-linked (GlcNAc...) asparagine). Residues 763 to 1019 (IWNGNSTEIG…VFLSWIRQFI (257 aa)) enclose the Peptidase S1 domain. A disulfide bridge connects residues Cys794 and Cys810. Catalysis depends on charge relay system residues His809 and Asp865. N-linked (GlcNAc...) asparagine glycosylation is present at Asn912. Cysteines 932 and 951 form a disulfide. Asp960 contributes to the substrate binding site. A disulfide bridge links Cys962 with Cys996. The active-site Charge relay system is Ser966.

Belongs to the peptidase S1 family. Heterodimer of a light chain and a heavy chain linked by a disulfide bond. Forms a covalent heterodimer with intracellular coagulation inhibitor 1/LICI-1. Forms a covalent heterodimer with intracellular coagulation inhibitor 2/LICI-2. In terms of processing, N-glycosylated. Lipopolysaccharide (LPS) activates clotting factor C by inducing the proteolytic cleavage of the clotting factor C light chain into clotting factor C chains A and B. Clotting factor C chains heavy, A and B remain associated via interchain disulfide bonds. Expressed in hemocytes (at protein level).

It localises to the secreted. It catalyses the reaction Selective cleavage of 103-Arg-|-Ser-104 and 124-Ile-|-Ile-125 bonds in Limulus clotting factor B to form activated factor B. Cleavage of -Pro-Arg-|-Xaa- bonds in synthetic substrates.. Its activity is regulated as follows. Activated by Gram-negative bacterial lipopolysaccharides. Inhibited by intracellular coagulation inhibitor 1/LICI-1 and to a lesser extent by intracellular coagulation inhibitors 2/LICI-2 and 3/LICI-3. Inhibited by the small molecule diisopropyl fluorophosphate (DFP). Functionally, this enzyme is closely associated with an endotoxin-sensitive hemolymph coagulation system which may play important roles in both hemostasis and host defense mechanisms. Its active form catalyzes the activation of clotting factor B. The chain is Clotting factor C from Tachypleus tridentatus (Japanese horseshoe crab).